The primary structure comprises 405 residues: tRNA-specific 2-thiouridylase MnmA (405 aa).

ATP is bound by residues 41-48 (AMSGGVDS) and leucine 67. Cysteine 135 serves as the catalytic Nucleophile. A disulfide bridge links cysteine 135 with cysteine 231. Residue glycine 159 participates in ATP binding. An interaction with tRNA region spans residues 181–183 (KDQ). The active-site Cysteine persulfide intermediate is cysteine 231.

This sequence belongs to the MnmA/TRMU family.

The protein localises to the cytoplasm. The catalysed reaction is S-sulfanyl-L-cysteinyl-[protein] + uridine(34) in tRNA + AH2 + ATP = 2-thiouridine(34) in tRNA + L-cysteinyl-[protein] + A + AMP + diphosphate + H(+). Catalyzes the 2-thiolation of uridine at the wobble position (U34) of tRNA, leading to the formation of s(2)U34. The protein is tRNA-specific 2-thiouridylase MnmA of Maricaulis maris (strain MCS10) (Caulobacter maris).